A 527-amino-acid chain; its full sequence is Type II methyltransferase M.XamI (527 aa).

The protein belongs to the N(4)/N(6)-methyltransferase family.

It carries out the reaction a 2'-deoxyadenosine in DNA + S-adenosyl-L-methionine = an N(6)-methyl-2'-deoxyadenosine in DNA + S-adenosyl-L-homocysteine + H(+). Its function is as follows. A gamma subtype methylase that recognizes the double-stranded sequence 5'-GTCGAC-3', possibly methylates A-5 on both strands, and protects the DNA from cleavage by the XamI endonuclease. This is Type II methyltransferase M.XamI from Xanthomonas campestris pv. amaranthicola.